The sequence spans 61 residues: Conotoxin 3 (61 aa).

Positions 1–21 (MRCLPVFVILLLLIASVPSDA) are cleaved as a signal peptide. Residues 22-48 (VQLKTKDDMPLPSFNGNARRTPRMLSN) constitute a propeptide that is removed on maturation. Trp58 carries the post-translational modification 6'-bromotryptophan.

The protein belongs to the conotoxin T superfamily. In terms of processing, contains 2 disulfide bonds that can be either 'C1-C3, C2-C4' or 'C1-C4, C2-C3', since these disulfide connectivities have been observed for conotoxins with cysteine framework V (for examples, see AC P0DQQ7 and AC P81755). Post-translationally, contains 2 disulfide bonds. As to expression, expressed by the venom duct.

The protein resides in the secreted. This is Conotoxin 3 from Conus textile (Cloth-of-gold cone).